Consider the following 522-residue polypeptide: Thiamine biosynthetic bifunctional enzyme TH1, chloroplastic (522 aa).

The transit peptide at 1–36 (MNSLGGIRSWPANWRSTTASMTTTESVRKVPQVLTV) directs the protein to the chloroplast. 4-amino-2-methyl-5-(diphosphooxymethyl)pyrimidine is bound by residues 345-349 (QLREK) and N377. Positions 378 and 397 each coordinate Mg(2+). Residue S416 participates in 4-amino-2-methyl-5-(diphosphooxymethyl)pyrimidine binding. 442-444 (TNT) serves as a coordination point for 2-[(2R,5Z)-2-carboxy-4-methylthiazol-5(2H)-ylidene]ethyl phosphate. K445 is a 4-amino-2-methyl-5-(diphosphooxymethyl)pyrimidine binding site. Residues G472 and 495-496 (VS) each bind 2-[(2R,5Z)-2-carboxy-4-methylthiazol-5(2H)-ylidene]ethyl phosphate.

It belongs to the thiamine-phosphate synthase family. Mg(2+) serves as cofactor.

It localises to the plastid. The protein resides in the chloroplast. The enzyme catalyses 2-[(2R,5Z)-2-carboxy-4-methylthiazol-5(2H)-ylidene]ethyl phosphate + 4-amino-2-methyl-5-(diphosphooxymethyl)pyrimidine + 2 H(+) = thiamine phosphate + CO2 + diphosphate. It catalyses the reaction 2-(2-carboxy-4-methylthiazol-5-yl)ethyl phosphate + 4-amino-2-methyl-5-(diphosphooxymethyl)pyrimidine + 2 H(+) = thiamine phosphate + CO2 + diphosphate. It carries out the reaction 4-methyl-5-(2-phosphooxyethyl)-thiazole + 4-amino-2-methyl-5-(diphosphooxymethyl)pyrimidine + H(+) = thiamine phosphate + diphosphate. The catalysed reaction is 4-amino-5-hydroxymethyl-2-methylpyrimidine + ATP = 4-amino-2-methyl-5-(phosphooxymethyl)pyrimidine + ADP + H(+). The protein operates within cofactor biosynthesis; thiamine diphosphate biosynthesis; thiamine phosphate from 4-amino-2-methyl-5-diphosphomethylpyrimidine and 4-methyl-5-(2-phosphoethyl)-thiazole: step 1/1. Its pathway is cofactor biosynthesis; thiamine diphosphate biosynthesis; 4-amino-2-methyl-5-diphosphomethylpyrimidine from 5-amino-1-(5-phospho-D-ribosyl)imidazole: step 2/3. Its function is as follows. Essential for thiamine biosynthesis. Bifunctional enzyme that catalyzes the phosphorylation of hydroxymethylpyrimidine phosphate (HMP-P) to HMP-PP and condenses 4-methyl-5-(beta-hydroxyethyl)thiazole monophosphate (THZ-P) and 2-methyl-4-amino-5-hydroxymethyl pyrimidine pyrophosphate (HMP-PP) to form thiamine monophosphate (TMP). This Arabidopsis thaliana (Mouse-ear cress) protein is Thiamine biosynthetic bifunctional enzyme TH1, chloroplastic (TH1).